The chain runs to 247 residues: 2,3-bisphosphoglycerate-dependent phosphoglycerate mutase (247 aa).

Substrate contacts are provided by residues 8-15 (RHGQSLWN), 21-22 (TG), R60, 87-90 (ERHY), K98, 114-115 (RR), and 183-184 (GN). H9 (tele-phosphohistidine intermediate) is an active-site residue. The active-site Proton donor/acceptor is E87.

It belongs to the phosphoglycerate mutase family. BPG-dependent PGAM subfamily.

The catalysed reaction is (2R)-2-phosphoglycerate = (2R)-3-phosphoglycerate. It functions in the pathway carbohydrate degradation; glycolysis; pyruvate from D-glyceraldehyde 3-phosphate: step 3/5. Catalyzes the interconversion of 2-phosphoglycerate and 3-phosphoglycerate. This Hydrogenobaculum sp. (strain Y04AAS1) protein is 2,3-bisphosphoglycerate-dependent phosphoglycerate mutase.